The primary structure comprises 604 residues: Prostaglandin G/H synthase 2 (604 aa).

Residues methionine 1–alanine 17 form the signal peptide. The EGF-like domain occupies alanine 18 to threonine 55. Disulfide bonds link cysteine 21–cysteine 32, cysteine 22–cysteine 145, cysteine 26–cysteine 42, and cysteine 44–cysteine 54. N-linked (GlcNAc...) asparagine glycosylation is present at asparagine 53. Residue arginine 106 participates in substrate binding. Residue asparagine 130 is glycosylated (N-linked (GlcNAc...) asparagine). Histidine 193 functions as the Proton acceptor in the catalytic mechanism. Substrate is bound at residue tyrosine 341. Tyrosine 371 (for cyclooxygenase activity) is an active-site residue. Histidine 374 is a heme b binding site. A glycan (N-linked (GlcNAc...) asparagine) is linked at asparagine 396. Cysteine 526 bears the S-nitrosocysteine mark. Cysteine 555 and cysteine 561 are disulfide-bonded. Serine 565 is modified (O-acetylserine; by SPHK1). Asparagine 580 carries an N-linked (GlcNAc...) asparagine glycan.

The protein belongs to the prostaglandin G/H synthase family. In terms of assembly, homodimer. The cofactor is heme b. Post-translationally, S-nitrosylation by NOS2 (iNOS) activates enzyme activity. S-nitrosylation may take place on different Cys residues in addition to Cys-526. Acetylated at Ser-565 by SPHK1. During neuroinflammation, acetylation by SPHK1 promotes neuronal secretion of specialized preresolving mediators (SPMs), especially 15-R-lipoxin A4, which results in an increase of phagocytic microglia. Following colon injury, expressed in the wound bed mesenchyme during the first phase of repair, probably by colonic mesenchymal stem cells (at protein level).

It localises to the microsome membrane. The protein resides in the endoplasmic reticulum membrane. The protein localises to the nucleus inner membrane. Its subcellular location is the nucleus outer membrane. The catalysed reaction is (5Z,8Z,11Z,14Z)-eicosatetraenoate + AH2 + 2 O2 = prostaglandin H2 + A + H2O. It carries out the reaction (5Z,8Z,11Z,14Z)-eicosatetraenoate + 2 O2 = prostaglandin G2. The enzyme catalyses prostaglandin G2 + AH2 = prostaglandin H2 + A + H2O. It catalyses the reaction (5Z,8Z,11Z,14Z,17Z)-eicosapentaenoate + 2 O2 = prostaglandin G3. The catalysed reaction is prostaglandin G3 + AH2 = prostaglandin H3 + A + H2O. It carries out the reaction (8Z,11Z,14Z)-eicosatrienoate + 2 O2 = prostaglandin G1. The enzyme catalyses prostaglandin G1 + AH2 = prostaglandin H1 + A + H2O. It catalyses the reaction 2-(5Z,8Z,11Z,14Z)-eicosatetraenoyl-sn-glycero-3-phosphoethanolamine + 2 O2 = 2-(prostaglandin G2)-sn-glycero-3-phosphoethanolamine. The catalysed reaction is 2-(prostaglandin G2)-sn-glycero-3-phosphoethanolamine + AH2 = 2-(prostaglandin H2)-sn-glycero-3-phosphoethanolamine + A + H2O. It carries out the reaction 2-(5Z,8Z,11Z,14Z)-eicosatetraenoyl-sn-glycero-3-phosphocholine + 2 O2 = 2-(prostaglandin G2)-sn-glycero-3-phosphocholine. The enzyme catalyses 2-(prostaglandin G2)-sn-glycero-3-phosphocholine + AH2 = 2-(prostaglandin H2)-sn-glycero-3-phosphocholine + A + H2O. It catalyses the reaction (15S)-hydroperoxy-(5Z,8Z,11Z,13E)-eicosatetraenoate + AH2 = (15S)-hydroxy-(5Z,8Z,11Z,13E)-eicosatetraenoate + A + H2O. The catalysed reaction is 2-(5Z,8Z,11Z,14Z)-eicosatetraenoyl-sn-glycero-3-phosphocholine + AH2 + O2 = 2-[(15S)-hydroxy-(5Z,8Z,11Z,13E)-eicosatetraenoyl]-sn-glycero-3-phosphocholine + A + H2O. It carries out the reaction 2-(5Z,8Z,11Z,14Z)-eicosatetraenoyl-sn-glycero-3-phosphocholine + AH2 + O2 = 2-[(15R)-hydroxy-(5Z,8Z,11Z,13E)-eicosatetraenoyl]-sn-glycero-3-phosphocholine + A + H2O. The enzyme catalyses 2-(5Z,8Z,11Z,14Z)-eicosatetraenoyl-sn-glycero-3-phosphocholine + AH2 + O2 = 2-[(11R)-hydroxy-(5Z,8Z,12E,14Z)-eicosatetraenoyl]-sn-glycero-3-phosphocholine + A + H2O. It catalyses the reaction (9Z,12Z)-octadecadienoate + AH2 + O2 = 9-hydroxy-(10E,12Z)-octadecadienoate + A + H2O. The catalysed reaction is (9Z,12Z)-octadecadienoate + AH2 + O2 = 13-hydroxy-(9Z,11E)-octadecadienoate + A + H2O. It carries out the reaction (5Z,8Z,11Z,14Z)-eicosatetraenoate + AH2 + O2 = (15R)-hydroxy-(5Z,8Z,11Z,13E)-eicosatetraenoate + A + H2O. The enzyme catalyses (5Z,8Z,11Z,14Z)-eicosatetraenoate + AH2 + O2 = (11R)-hydroxy-(5Z,8Z,12E,14Z)-eicosatetraenoate + A + H2O. It catalyses the reaction (5Z,8Z,11Z,14Z,17Z)-eicosapentaenoate + AH2 + O2 = (11R)-hydroxy-(5Z,8Z,12E,14Z,17Z)-eicosapentaenoate + A + H2O. The catalysed reaction is (5Z,8Z,11Z,14Z,17Z)-eicosapentaenoate + AH2 + O2 = (18S)-hydroxy-(5Z,8Z,11Z,14Z,16E)-eicosapentaenoate + A + H2O. It carries out the reaction (5Z,8Z,11Z,14Z,17Z)-eicosapentaenoate + AH2 + O2 = (18R)-hydroxy-(5Z,8Z,11Z,14Z,16E)-eicosapentaenoate + A + H2O. The enzyme catalyses (5Z,8Z,11Z,14Z,17Z)-eicosapentaenoate + AH2 + O2 = (15R)-hydroxy-(5Z,8Z,11Z,13E,17Z)-eicosapentaenoate + A + H2O. It catalyses the reaction (5Z,8Z,11Z,14Z,17Z)-eicosapentaenoate + AH2 + O2 = (15S)-hydroxy-(5Z,8Z,11Z,13E,17Z)-eicosapentaenoate + A + H2O. The catalysed reaction is (7Z,10Z,13Z,16Z,19Z)-docosapentaenoate + AH2 + O2 = 13R-hydroxy-(7Z,10Z,14E,16Z,19Z)-docosapentaenoate + A + H2O. It carries out the reaction (4Z,7Z,10Z,13Z,16Z,19Z)-docosahexaenoate + AH2 + O2 = 13-hydroxy-(4Z,7Z,10Z,14E,16Z,19Z)-docosahexaenoate + A + H2O. The enzyme catalyses (5S)-hydroxy-(6E,8Z,11Z,14Z)-eicosatetraenoate + AH2 + O2 = (5S,15R)-dihydroxy-(6E,8Z,11Z,13E)-eicosatetraenoate + A + H2O. It catalyses the reaction (4Z,7Z,10Z,13Z,16Z,19Z)-docosahexaenoate + AH2 + O2 = 17R-hydroxy-(4Z,7Z,10Z,13Z,15E,19Z)-docosahexaenoate + A + H2O. The catalysed reaction is (5S)-hydroxy-(6E,8Z,11Z,14Z)-eicosatetraenoate + AH2 + O2 = (5S,15S)-dihydroxy-(6E,8Z,11Z,13E)-eicosatetraenoate + A + H2O. It carries out the reaction (5S)-hydroxy-(6E,8Z,11Z,14Z)-eicosatetraenoate + AH2 + O2 = (5S,11R)-dihydroxy-(6E,8Z,12E,14Z)-eicosatetraenoate + A + H2O. The enzyme catalyses 2-(5Z,8Z,11Z,14Z-eicosatetraenoyl)-glycerol + 2 O2 = 2-glyceryl-prostaglandin G2. It catalyses the reaction 2-glyceryl-prostaglandin G2 + AH2 = 2-glyceryl-prostaglandin H2 + A + H2O. The catalysed reaction is (5Z,8Z,11Z,14Z)-eicosatetraenoate + O2 = (15R)-hydroperoxy-(5Z,8Z,11Z,13E)-eicosatetraenoate. It carries out the reaction (5Z,8Z,11Z,14Z)-eicosatetraenoate + O2 = 11R-hydroperoxy-(5Z,8Z,12E,14Z)-eicosatetraenoate. The enzyme catalyses (9Z,12Z)-octadecadienoate + AH2 + O2 = (9R)-hydroxy-(10E,12Z)-octadecadienoate + A + H2O. It catalyses the reaction (9Z,12Z)-octadecadienoate + AH2 + O2 = (9S)-hydroxy-(10E,12Z)-octadecadienoate + A + H2O. The catalysed reaction is (9Z,12Z)-octadecadienoate + AH2 + O2 = (13S)-hydroxy-(9Z,11E)-octadecadienoate + A + H2O. It carries out the reaction (9Z,12Z)-octadecadienoate + AH2 + O2 = (13R)-hydroxy-(9Z,11E)-octadecadienoate + A + H2O. The protein operates within lipid metabolism; prostaglandin biosynthesis. Inhibited by the nonsteroidal anti-inflammatory drugs aspirin, naproxen, diclofenac, meclofenamic acid, indomethacin and their analogs. Functionally, dual cyclooxygenase and peroxidase in the biosynthesis pathway of prostanoids, a class of C20 oxylipins mainly derived from arachidonate, with a particular role in the inflammatory response. The cyclooxygenase activity oxygenates arachidonate (AA, C20:4(n-6)) to the hydroperoxy endoperoxide prostaglandin G2 (PGG2), and the peroxidase activity reduces PGG2 to the hydroxy endoperoxide PGH2, the precursor of all 2-series prostaglandins and thromboxanes. This complex transformation is initiated by abstraction of hydrogen at carbon 13 (with S-stereochemistry), followed by insertion of molecular O2 to form the endoperoxide bridge between carbon 9 and 11 that defines prostaglandins. The insertion of a second molecule of O2 (bis-oxygenase activity) yields a hydroperoxy group in PGG2 that is then reduced to PGH2 by two electrons. Similarly catalyzes successive cyclooxygenation and peroxidation of dihomo-gamma-linoleate (DGLA, C20:3(n-6)) and eicosapentaenoate (EPA, C20:5(n-3)) to corresponding PGH1 and PGH3, the precursors of 1- and 3-series prostaglandins. In an alternative pathway of prostanoid biosynthesis, converts 2-arachidonoyl lysophopholipids to prostanoid lysophopholipids, which are then hydrolyzed by intracellular phospholipases to release free prostanoids. Metabolizes 2-arachidonoyl glycerol yielding the glyceryl ester of PGH2, a process that can contribute to pain response. Generates lipid mediators from n-3 and n-6 polyunsaturated fatty acids (PUFAs) via a lipoxygenase-type mechanism. Oxygenates PUFAs to hydroperoxy compounds and then reduces them to corresponding alcohols. Plays a role in the generation of resolution phase interaction products (resolvins) during both sterile and infectious inflammation. Metabolizes docosahexaenoate (DHA, C22:6(n-3)) to 17R-HDHA, a precursor of the D-series resolvins (RvDs). As a component of the biosynthetic pathway of E-series resolvins (RvEs), converts eicosapentaenoate (EPA, C20:5(n-3)) primarily to 18S-HEPE that is further metabolized by ALOX5 and LTA4H to generate 18S-RvE1 and 18S-RvE2. In vascular endothelial cells, converts docosapentaenoate (DPA, C22:5(n-3)) to 13R-HDPA, a precursor for 13-series resolvins (RvTs) shown to activate macrophage phagocytosis during bacterial infection. In activated leukocytes, contributes to oxygenation of hydroxyeicosatetraenoates (HETE) to diHETES (5,15-diHETE and 5,11-diHETE). Can also use linoleate (LA, (9Z,12Z)-octadecadienoate, C18:2(n-6)) as substrate and produce hydroxyoctadecadienoates (HODEs) in a regio- and stereospecific manner, being (9R)-HODE ((9R)-hydroxy-(10E,12Z)-octadecadienoate) and (13S)-HODE ((13S)-hydroxy-(9Z,11E)-octadecadienoate) its major products. During neuroinflammation, plays a role in neuronal secretion of specialized preresolving mediators (SPMs) 15R-lipoxin A4 that regulates phagocytic microglia. The chain is Prostaglandin G/H synthase 2 from Mus musculus (Mouse).